The following is a 429-amino-acid chain: Histidine--tRNA ligase (429 aa).

The protein belongs to the class-II aminoacyl-tRNA synthetase family. Homodimer.

It localises to the cytoplasm. It carries out the reaction tRNA(His) + L-histidine + ATP = L-histidyl-tRNA(His) + AMP + diphosphate + H(+). In Streptococcus pneumoniae serotype 2 (strain D39 / NCTC 7466), this protein is Histidine--tRNA ligase.